A 419-amino-acid polypeptide reads, in one-letter code: MTTQLEQAWELAKQRFAAVGIDIEEALRQLDRLPVSMHCWQGDDVAGFENPEGSLTGGIQSTGNYPGKARNATELRADLEQALRLIPGPKRLNLHAIYLESDTPVARDQIKPEHFKNWVEWAKANRLGLDFNPTCFSHPLSADGFTLSHPDAKIRQFWIDHCKASRRVSAYFGEQLGTPSVMNIWIPDGMKDITVDRLAPRQRLLEALDEVISEKFDPAHHIDAVESKLFGIGAESYTVGSNEFYMGYATSRQTALCLDAGHFHPTEVISDKISAAMLYVPRLLLHVSRPVRWDSDHVVLLDDETQAIASEIVRHNLFDRVHIGLDFFDASINRVAAWVIGTRNMKKALLRALLEPTDQLRQLEASGDYTARLALLEEQKSLPWQAVWEMYCQRHDTPAGSQWLDSVRAYEKEILSKRS.

Residues His262, Asp294, and Asp296 each contribute to the Mn(2+) site.

This sequence belongs to the rhamnose isomerase family. In terms of assembly, homotetramer. It depends on Mn(2+) as a cofactor.

The protein localises to the cytoplasm. The catalysed reaction is L-rhamnopyranose = L-rhamnulose. The protein operates within carbohydrate degradation; L-rhamnose degradation; glycerone phosphate from L-rhamnose: step 1/3. Its function is as follows. Catalyzes the interconversion of L-rhamnose and L-rhamnulose. This is L-rhamnose isomerase from Salmonella newport (strain SL254).